We begin with the raw amino-acid sequence, 307 residues long: MNGKIWVLGDAVVDLLPDGEGRLLQCPGGAPANVAVGVARLGGDSGFIGRVGDDPFGRFMRHTLAQEQVDVNYMRLDAAQRTSTVVVDLDSHGERTFTFMVRPSADLFLQPEDLPPFAAGQWLHVCSIALSAEPSRSTTFAALEAIKRAGGYVSFDPNIRSDLWQDPQDLRDCLDRALALADAIKLSEEELAFISGSDDIVSGIARLNARFQPTLLLVTQGKAGVQAALRGQVSHFPARPVVAVDTTGAGDAFVAGLLAGLAAHGIPDNLAALAPDLALAQTCGALATTAKGAMTALPYKDDLQRSL.

This sequence belongs to the carbohydrate kinase PfkB family.

The enzyme catalyses D-fructose + ATP = D-fructose 6-phosphate + ADP + H(+). Its function is as follows. Involved in sucrose metabolism. This is Fructokinase (scrK) from Klebsiella pneumoniae.